We begin with the raw amino-acid sequence, 580 residues long: Proline--tRNA ligase (580 aa).

This sequence belongs to the class-II aminoacyl-tRNA synthetase family. ProS type 1 subfamily. In terms of assembly, homodimer.

The protein resides in the cytoplasm. It catalyses the reaction tRNA(Pro) + L-proline + ATP = L-prolyl-tRNA(Pro) + AMP + diphosphate. Its function is as follows. Catalyzes the attachment of proline to tRNA(Pro) in a two-step reaction: proline is first activated by ATP to form Pro-AMP and then transferred to the acceptor end of tRNA(Pro). As ProRS can inadvertently accommodate and process non-cognate amino acids such as alanine and cysteine, to avoid such errors it has two additional distinct editing activities against alanine. One activity is designated as 'pretransfer' editing and involves the tRNA(Pro)-independent hydrolysis of activated Ala-AMP. The other activity is designated 'posttransfer' editing and involves deacylation of mischarged Ala-tRNA(Pro). The misacylated Cys-tRNA(Pro) is not edited by ProRS. The chain is Proline--tRNA ligase from Polynucleobacter necessarius subsp. necessarius (strain STIR1).